A 515-amino-acid polypeptide reads, in one-letter code: 2-isopropylmalate synthase (515 aa).

The region spanning I4 to K266 is the Pyruvate carboxyltransferase domain. Mn(2+)-binding residues include D13, H201, H203, and N237. The interval E391–V515 is regulatory domain.

The protein belongs to the alpha-IPM synthase/homocitrate synthase family. LeuA type 1 subfamily. Homodimer. It depends on Mn(2+) as a cofactor.

The protein resides in the cytoplasm. The catalysed reaction is 3-methyl-2-oxobutanoate + acetyl-CoA + H2O = (2S)-2-isopropylmalate + CoA + H(+). Its pathway is amino-acid biosynthesis; L-leucine biosynthesis; L-leucine from 3-methyl-2-oxobutanoate: step 1/4. In terms of biological role, catalyzes the condensation of the acetyl group of acetyl-CoA with 3-methyl-2-oxobutanoate (2-ketoisovalerate) to form 3-carboxy-3-hydroxy-4-methylpentanoate (2-isopropylmalate). This is 2-isopropylmalate synthase from Halalkalibacterium halodurans (strain ATCC BAA-125 / DSM 18197 / FERM 7344 / JCM 9153 / C-125) (Bacillus halodurans).